Here is a 67-residue protein sequence, read N- to C-terminus: Large ribosomal subunit protein uL30 (67 aa).

Belongs to the universal ribosomal protein uL30 family. As to quaternary structure, part of the 50S ribosomal subunit.

The protein is Large ribosomal subunit protein uL30 of Sorangium cellulosum (strain So ce56) (Polyangium cellulosum (strain So ce56)).